The following is a 1218-amino-acid chain: NACHT, LRR and PYD domains-containing protein 1a allele 5 (1218 aa).

Residues 1–29 (MGESQSKQESNTRVAQHGSQQDVDPTFQT) are compositionally biased toward polar residues. Disordered stretches follow at residues 1 to 44 (MGES…QVEQ) and 71 to 91 (EMDH…DRSE). Positions 77-87 (RRHSHQSKKKL) are enriched in basic residues. The region spanning 175-484 (QLVIIEGAAG…EFFAAMSYIL (310 aa)) is the NACHT domain. An ATP-binding site is contributed by 181 to 188 (GAAGIGKS). LRR repeat units follow at residues 343–364 (KERN…LTLC), 673–693 (NLEE…RSLC), and 730–750 (RLAE…RQLC). Positions 799 to 815 (TMPTENTDGEESLTSSK) are enriched in polar residues. The disordered stretch occupies residues 799–842 (TMPTENTDGEESLTSSKQQQQQSGDKHMEPLGTDDDFWGPSGPV). A ZU5 region spans residues 835–968 (FWGPSGPVST…HFAVLENPSF (134 aa)). The FIIND domain occupies 835–1118 (FWGPSGPVST…LRPALPRMAS (284 aa)). Positions 969-1118 (SPMGVLLRMI…LRPALPRMAS (150 aa)) are UPA. The CARD domain occupies 1122 to 1211 (DAPALLHFVD…HLIMDLLEKS (90 aa)).

This sequence belongs to the NLRP family. As to quaternary structure, interacts (via LRR repeats) with BCL2 and BCL2L1 (via the loop between motifs BH4 and BH3). Interacts with NOD2; this interaction is enhanced in the presence of muramyl dipeptide (MDP) and increases IL1B release. Interacts with EIF2AK2/PKR; this interaction requires EIF2AK2 activity, is accompanied by EIF2AK2 autophosphorylation and promotes inflammasome assembly in response to danger-associated signals. Interacts with MEFV; this interaction targets Nlrp1a to degradation by autophagy, hence preventing excessive IL1B- and IL18-mediated inflammation. Interacts with DPP9; leading to inhibit activation of the inflammasome. DPP9 acts via formation of a ternary complex, composed of a DPP9 homodimer, one full-length NLRP1 protein, and one cleaved C-terminus of Nlrp1a (NACHT, LRR and PYD domains-containing protein 1a, C-terminus). Interacts with DPP8; leading to inhibit activation of the inflammasome, probably via formation of a ternary complex with DPP8. In terms of assembly, interacts with the C-terminal part of Nlrp1a (NACHT, LRR and PYD domains-containing protein 1a, C-terminus) in absence of pathogens and other damage-associated signals. Interacts with the N-terminal part of Nlrp1a (NACHT, LRR and PYD domains-containing protein 1a, N-terminus) in absence of pathogens and other damage-associated signals. Homomultimer; forms the Nlrp1a inflammasome polymeric complex, a filament composed of homopolymers of this form in response to pathogens and other damage-associated signals. The Nlrp1a inflammasome polymeric complex directly recruits pro-caspase-1 (proCASP1) independently of PYCARD/ASC. Interacts (via CARD domain) with CASP1 (via CARD domain); leading to CASP1 activation. Post-translationally, autocatalytically cleaved. Autocatalytic cleavage in FIIND region occurs constitutively, prior to activation signals, and is required for inflammasome activity (IL1B release), possibly by facilitating CASP1 binding. Both N- and C-terminal parts remain associated non-covalently. Ubiquitinated in response to pathogen-associated signals, leading to its degradation by the proteasome and subsequent release of the cleaved C-terminal part of the protein (NACHT, LRR and PYD domains-containing protein 1a, C-terminus), which polymerizes and forms the Nlrp1a inflammasome.

Its subcellular location is the cytoplasm. It localises to the cytosol. The protein localises to the nucleus. It is found in the inflammasome. Its activity is regulated as follows. Activated by pathogens and other damage-associated signals: activation promotes ubiquitination and degradation of the N-terminal part, releasing the cleaved C-terminal part of the protein (NACHT, LRR and PYD domains-containing protein 1a, C-terminus), which polymerizes and forms the Nlrp1a inflammasome. Nlrp1a inflammasome is inhibited by DPP8 and DPP9, which sequester the C-terminal fragment of Nlrp1a (NACHT, LRR and PYD domains-containing protein 1a, C-terminus) in a ternary complex, thereby preventing Nlrp1a oligomerization and activation. Nlrp1a inflammasome is strongly activated by Val-boroPro (Talabostat, PT-100), an inhibitor of dipeptidyl peptidases DPP8 and DPP9. Val-boroPro relieves inhibition of DPP8 and/or DPP9 by promoting disruption of the ternary complex, releasing its C-terminal part from autoinhibition. Not activated by cleavage by B.anthracis lethal toxin (LT) endopeptidase. Highly activated by Toxoplasma gondii. In terms of biological role, acts as the sensor component of the Nlrp1a inflammasome, which mediates inflammasome activation in response to various pathogen-associated signals, leading to subsequent pyroptosis. Inflammasomes are supramolecular complexes that assemble in the cytosol in response to pathogens and other damage-associated signals and play critical roles in innate immunity and inflammation. Acts as a recognition receptor (PRR): recognizes specific pathogens and other damage-associated signals, such as Val-boroPro inhibitor, and mediates the formation of the inflammasome polymeric complex. In response to pathogen-associated signals, the N-terminal part of Nlrp1a is degraded by the proteasome, releasing the cleaved C-terminal part of the protein (NACHT, LRR and PYD domains-containing protein 1a, C-terminus), which polymerizes to initiate the formation of the inflammasome complex: the inflammasome directly recruits pro-caspase-1 (proCASP1) independently of PYCARD/ASC and promotes caspase-1 (CASP1) activation, which subsequently cleaves and activates inflammatory cytokines IL1B and IL18 and gasdermin-D (GSDMD), leading to pyroptosis. In the absence of GSDMD expression, the Nlrp1a inflammasome is able to recruit and activate CASP8, leading to activation of gasdermin-E (GSDME). Constitutes the precursor of the Nlrp1a inflammasome, which mediates autoproteolytic processing within the FIIND domain to generate the N-terminal and C-terminal parts, which are associated non-covalently in absence of pathogens and other damage-associated signals. Functionally, regulatory part that prevents formation of the Nlrp1a inflammasome: in absence of pathogens and other damage-associated signals, interacts with the C-terminal part of Nlrp1a (NACHT, LRR and PYD domains-containing protein 1a, C-terminus), preventing activation of the Nlrp1a inflammasome. In response to pathogen-associated signals, this part is ubiquitinated by the N-end rule pathway and degraded by the proteasome, releasing the cleaved C-terminal part of the protein, which polymerizes and forms the Nlrp1a inflammasome. Its function is as follows. Constitutes the active part of the Nlrp1a inflammasome. In absence of pathogens and other damage-associated signals, interacts with the N-terminal part of Nlrp1a (NACHT, LRR and PYD domains-containing protein 1a, N-terminus), preventing activation of the Nlrp1a inflammasome. In response to pathogen-associated signals, the N-terminal part of Nlrp1a is degraded by the proteasome, releasing this form, which polymerizes to form the Nlrp1a inflammasome complex: the Nlrp1a inflammasome complex then directly recruits pro-caspase-1 (proCASP1) and promotes caspase-1 (CASP1) activation, leading to gasdermin-D (GSDMD) cleavage and subsequent pyroptosis. The sequence is that of NACHT, LRR and PYD domains-containing protein 1a allele 5 from Rattus norvegicus (Rat).